Reading from the N-terminus, the 51-residue chain is Small ribosomal subunit protein uS14 (51 aa).

C16, C19, C34, and C37 together coordinate Zn(2+).

The protein belongs to the universal ribosomal protein uS14 family. Zinc-binding uS14 subfamily. As to quaternary structure, part of the 30S ribosomal subunit. It depends on Zn(2+) as a cofactor.

Functionally, binds 16S rRNA, required for the assembly of 30S particles. The chain is Small ribosomal subunit protein uS14 from Archaeoglobus fulgidus (strain ATCC 49558 / DSM 4304 / JCM 9628 / NBRC 100126 / VC-16).